A 359-amino-acid chain; its full sequence is Protein disulfide-isomerase C17H9.14c (359 aa).

The first 19 residues, 1–19 (MRLPLLSFVIFALFALVFA), serve as a signal peptide directing secretion. Thioredoxin domains are found at residues 20-130 (SGVV…EKTG) and 134-250 (RKIV…KKSG). Active-site nucleophile residues include Cys51 and Cys54. 2 cysteine pairs are disulfide-bonded: Cys51-Cys54 and Cys170-Cys173.

It belongs to the protein disulfide isomerase family.

It carries out the reaction Catalyzes the rearrangement of -S-S- bonds in proteins.. Its function is as follows. Participates in the folding of proteins containing disulfide bonds, may be involved in glycosylation, prolyl hydroxylation and triglyceride transfer. The protein is Protein disulfide-isomerase C17H9.14c of Schizosaccharomyces pombe (strain 972 / ATCC 24843) (Fission yeast).